The sequence spans 477 residues: ATP synthase subunit beta (477 aa).

148–155 (GGAGVGKT) lines the ATP pocket.

The protein belongs to the ATPase alpha/beta chains family. As to quaternary structure, F-type ATPases have 2 components, CF(1) - the catalytic core - and CF(0) - the membrane proton channel. CF(1) has five subunits: alpha(3), beta(3), gamma(1), delta(1), epsilon(1). CF(0) has three main subunits: a(1), b(2) and c(9-12). The alpha and beta chains form an alternating ring which encloses part of the gamma chain. CF(1) is attached to CF(0) by a central stalk formed by the gamma and epsilon chains, while a peripheral stalk is formed by the delta and b chains.

Its subcellular location is the cell inner membrane. It carries out the reaction ATP + H2O + 4 H(+)(in) = ADP + phosphate + 5 H(+)(out). Functionally, produces ATP from ADP in the presence of a proton gradient across the membrane. The catalytic sites are hosted primarily by the beta subunits. This chain is ATP synthase subunit beta, found in Psychrobacter cryohalolentis (strain ATCC BAA-1226 / DSM 17306 / VKM B-2378 / K5).